Here is a 64-residue protein sequence, read N- to C-terminus: Putative neurotoxin 6 (64 aa).

An N-terminal signal peptide occupies residues 1 to 24 (MKNKFAALVITLFVLVLAIDNVTT).

Belongs to the scolopendra neurotoxin 6 family. Contains 3 disulfide bonds. In terms of tissue distribution, expressed by the venom gland.

The protein resides in the secreted. This Scolopendra mutilans (Chinese red-headed centipede) protein is Putative neurotoxin 6.